We begin with the raw amino-acid sequence, 73 residues long: Antitoxin VapB20 (73 aa).

In terms of biological role, antitoxin component of a type II toxin-antitoxin (TA) system. Upon expression in E.coli neutralizes the toxic effect of cognate toxin VapC20. This Mycobacterium tuberculosis (strain ATCC 25618 / H37Rv) protein is Antitoxin VapB20 (vapB20).